The primary structure comprises 541 residues: Chaperonin GroEL (541 aa).

ATP-binding positions include 29–32 (TLGP), 86–90 (DGTTT), Gly413, and Asp494.

Belongs to the chaperonin (HSP60) family. In terms of assembly, forms a cylinder of 14 subunits composed of two heptameric rings stacked back-to-back. Interacts with the co-chaperonin GroES.

It localises to the cytoplasm. The enzyme catalyses ATP + H2O + a folded polypeptide = ADP + phosphate + an unfolded polypeptide.. In terms of biological role, together with its co-chaperonin GroES, plays an essential role in assisting protein folding. The GroEL-GroES system forms a nano-cage that allows encapsulation of the non-native substrate proteins and provides a physical environment optimized to promote and accelerate protein folding. In Acetivibrio thermocellus (strain ATCC 27405 / DSM 1237 / JCM 9322 / NBRC 103400 / NCIMB 10682 / NRRL B-4536 / VPI 7372) (Clostridium thermocellum), this protein is Chaperonin GroEL.